The chain runs to 918 residues: Chaperone protein ClpC4, chloroplastic (918 aa).

Residues 266–515 (LMEYGTNLTK…RLRNAQCKPS (250 aa)) form an i region. Residues 311–318 (GEPGVGKT) and 653–660 (GPTGVGKS) contribute to the ATP site. Residues 579 to 774 (VTEDDVRHAI…LIVMTTNIGS (196 aa)) form an II region.

This sequence belongs to the ClpA/ClpB family. ClpC subfamily.

The protein resides in the plastid. It is found in the chloroplast. Its function is as follows. Molecular chaperone that may interact with a ClpP-like protease involved in degradation of denatured proteins in the chloroplast. The sequence is that of Chaperone protein ClpC4, chloroplastic (CPLC4) from Oryza sativa subsp. japonica (Rice).